The chain runs to 382 residues: Kelch domain-containing protein 3 (382 aa).

5 Kelch repeats span residues R25 to R77, T88 to K138, I139 to G189, H191 to G249, and L251 to D301.

Component of a CRL2(KLHDC3) complex, also named ECS(KLHDC3) complex, composed of CUL2, Elongin BC (ELOB and ELOC), RBX1 and substrate-specific adapter KLHDC3. May form oligomers as a KLHDC3-ELOB-ELOC complex; this interaction is likely autoinhibitory for the E3 ligase complex.

It localises to the cytoplasm. It participates in protein modification; protein ubiquitination. In terms of biological role, substrate-recognition component of a Cul2-RING (CRL2) E3 ubiquitin-protein ligase complex of the DesCEND (destruction via C-end degrons) pathway, which recognizes a C-degron located at the extreme C terminus of target proteins, leading to their ubiquitination and degradation. The C-degron recognized by the DesCEND pathway is usually a motif of less than ten residues and can be present in full-length proteins, truncated proteins or proteolytically cleaved forms. The CRL2(KLHDC3) complex specifically recognizes proteins with a glycine (Gly) at the C-terminus, leading to their ubiquitination and degradation: recognizes the C-terminal -Arg-(Xaa)n-Arg-Gly, -Arg-(Xaa)n-Lys-Gly, and -Arg-(Xaa)n-Gln-Gly degrons. The CRL2(KLHDC3) complex mediates ubiquitination and degradation of truncated SELENOV and SEPHS2 selenoproteins produced by failed UGA/Sec decoding, which end with a glycine. May be involved in meiotic recombination process. This Homo sapiens (Human) protein is Kelch domain-containing protein 3.